Here is a 345-residue protein sequence, read N- to C-terminus: NADPH-dependent oxidoreductase 2-alkenal reductase (345 aa).

Residues 52–53 (PY), 163–169 (AASGAVG), Gly188, Lys192, Tyr208, Asn232, Cys254, Tyr260, 284–286 (FVV), Phe330, and 334–336 (NVG) each bind NADP(+). Tyr53 lines the substrate pocket. Tyr260 serves as a coordination point for substrate.

Belongs to the NADP-dependent oxidoreductase L4BD family. Homodimer. As to expression, expressed in leaves.

Its subcellular location is the cytoplasm. It is found in the nucleus. The protein resides in the nucleoplasm. It catalyses the reaction an n-alkanal + NAD(+) = an alk-2-enal + NADH + H(+). The catalysed reaction is an n-alkanal + NADP(+) = an alk-2-enal + NADPH + H(+). With respect to regulation, inhibited by N-ethylmaleimide and p-chloromercuribenzoic acid. In terms of biological role, involved in the detoxification of reactive carbonyls. Acts on lipid peroxide-derived reactive aldehydes. Specific to a double bond activated by an adjacent carbonyl group. Can use both quinones and diamide as substrates, but not menadione, ferricyanide or phylloquinone. Can use 4-hydroxy-(2E)-nonenal (HNE), 4-hydroxy-(2E)-hexenal (HHE), (2E)-nonenal, (2E)-hexenal, (2E)-pentenal, propenal (acrolein), 3-buten-2-one and 3-penten-2-one, but not (R)-(-)-carvone, n-nonanal, n-hexanal, (3Z)-hexanal, cyclohex-2-en-1-one or 12-oxo phytodienoic acid (OPDA) as electron acceptors. Catalyzes the reduction of the alpha,beta-unsaturated bond of 2-alkenals, of lipid peroxide-derived oxenes 9-oxo-10(E),12(Z)-octadecadienoic acid (9-KODE) and 13-oxo-9(Z),11(E)-octadecadienoic acid (13-KODE), as well as 4-oxo-(2E)-nonenal and 4-hydroxynonenal. Can use 12-oxo-10(E) dodecanoate (traumatin), trans-1,3 diphenyl-2-propenone, trans-1,4-diphenyl-2-butene-1,4-dione, 9-oxo-12,13-epoxy-(10E)-octadecenoic acid (trans-EKODE-1b) and 9,13-dihydroxy-10-oxo-11-octadecenoic acid as substrates. Catalyzes the reduction of the 7-8 double bond of phenylpropanal substrates, such as p-coumaryl aldehyde and coniferyl aldehyde (in vitro). Has activity towards toxic substrates, such as 4-hydroxy-(2E)-nonenal (in vitro). May play a distinct role in plant antioxidant defense and is possibly involved in NAD(P)/NAD(P)H homeostasis. The protein is NADPH-dependent oxidoreductase 2-alkenal reductase of Arabidopsis thaliana (Mouse-ear cress).